The following is a 130-amino-acid chain: Capsid protein (130 aa).

Residues 31–104 (EWLSNNSRSQ…FAATDDVTVI (74 aa)) are viral RNA-binding.

The protein belongs to the Leviviricetes capsid protein family. Homodimer. The capsid proteins form dimers that assemble by group of 5. Twelve such pentamers are linked together with free dimers. The homodimers binds to the viral RNA via an operator hairpin, but also to many other RNA sequences in the viral genome; this interaction probably shifts the virus from the replicative to the assembly phase and ensures specific encapsidation of the viral genome.

The protein localises to the virion. Capsid protein self-assembles to form an icosahedral capsid with a T=3 symmetry, about 26 nm in diameter, and consisting of 89 capsid proteins dimers (178 capsid proteins). Involved in viral genome encapsidation through the interaction between a capsid protein dimer and the multiple packaging signals present in the RNA genome. The capsid also contains 1 copy of the A2 maturation protein. Functionally, acts as a translational repressor of viral replicase synthesis late in infection. This latter function is the result of capsid protein interaction with an RNA hairpin which contains the replicase ribosome-binding site. This is Capsid protein from Escherichia coli (Bacteriophage GA).